Reading from the N-terminus, the 296-residue chain is Formamidopyrimidine-DNA glycosylase (296 aa).

P2 functions as the Schiff-base intermediate with DNA in the catalytic mechanism. The Proton donor role is filled by E3. K58 acts as the Proton donor; for beta-elimination activity in catalysis. Residues H104, R126, and K169 each coordinate DNA. The FPG-type zinc finger occupies 260-296 (SVYDREGQACGTPGCGGTVARIVQAGRSTFYCAACQK). R286 acts as the Proton donor; for delta-elimination activity in catalysis.

It belongs to the FPG family. Monomer. It depends on Zn(2+) as a cofactor.

The enzyme catalyses Hydrolysis of DNA containing ring-opened 7-methylguanine residues, releasing 2,6-diamino-4-hydroxy-5-(N-methyl)formamidopyrimidine.. The catalysed reaction is 2'-deoxyribonucleotide-(2'-deoxyribose 5'-phosphate)-2'-deoxyribonucleotide-DNA = a 3'-end 2'-deoxyribonucleotide-(2,3-dehydro-2,3-deoxyribose 5'-phosphate)-DNA + a 5'-end 5'-phospho-2'-deoxyribonucleoside-DNA + H(+). Involved in base excision repair of DNA damaged by oxidation or by mutagenic agents. Acts as a DNA glycosylase that recognizes and removes damaged bases. Has a preference for oxidized purines, such as 7,8-dihydro-8-oxoguanine (8-oxoG). Has AP (apurinic/apyrimidinic) lyase activity and introduces nicks in the DNA strand. Cleaves the DNA backbone by beta-delta elimination to generate a single-strand break at the site of the removed base with both 3'- and 5'-phosphates. The sequence is that of Formamidopyrimidine-DNA glycosylase from Rhizobium etli (strain ATCC 51251 / DSM 11541 / JCM 21823 / NBRC 15573 / CFN 42).